The sequence spans 420 residues: Threonine aspartase 1 (420 aa).

The tract at residues 1-25 is disordered; the sequence is MIMEKGMNSGEGLPSRSSQASAAKV. The active-site Nucleophile is the threonine 234.

It belongs to the Ntn-hydrolase family. In terms of assembly, intramolecular proteolysis generates 2 subunits, alpha and beta, which reassemble through a non-covalent association to form the fully active enzyme.

In terms of biological role, protease responsible for KMT2A/MLL1 and KMT2D/MLL2 processing and activation. Through substrate activation, it controls the expression of HOXA genes, and the expression of key cell cycle regulators including CCNA1, CCNB1, CCNE1 and CDKN2A. The polypeptide is Threonine aspartase 1 (Tasp1) (Mus musculus (Mouse)).